Consider the following 957-residue polypeptide: Thioredoxin domain-containing protein 11 (957 aa).

Gly residues predominate over residues 1–13 (MSECGGRGGGGGS). The segment at 1-47 (MSECGGRGGGGGSSSSSDDAEDEGGGGGPAGSGSLSPAPAASSEGRL) is disordered. Residues 32–44 (SGSLSPAPAASSE) are compositionally biased toward low complexity. A helical membrane pass occupies residues 64–84 (LLCGAVALGCALLLALKFTCS). Residues 91–213 (IPAKPPVSFF…IEKFVRRVMK (123 aa)) form the Thioredoxin 1 domain. Cystine bridges form between C441/C444 and C691/C694. Positions 621-771 (LDPKQALMKF…LLRFILHHSD (151 aa)) constitute a Thioredoxin 2 domain. The stretch at 785–889 (AECLQNEAVL…ADASETLLTE (105 aa)) forms a coiled coil. Positions 904-925 (LEGRDGADDRVPPSKARSEHPE) are enriched in basic and acidic residues. The disordered stretch occupies residues 904–957 (LEGRDGADDRVPPSKARSEHPEPPGAPRLPASTPLPANISSTLASEGSPENRTD). A compositionally biased stretch (polar residues) spans 941–951 (NISSTLASEGS).

It belongs to the protein disulfide isomerase family. As to quaternary structure, interacts with the cytoplasmic part of DUOX1 and DUOX2. Interacts with TPO and CYBA.

The protein localises to the endoplasmic reticulum membrane. Its function is as follows. May act as a redox regulator involved in DUOX proteins folding. The interaction with DUOX1 and DUOX2 suggest that it belongs to a multiprotein complex constituting the thyroid H(2)O(2) generating system. It is however not sufficient to assist DUOX1 and DUOX2 in H(2)O(2) generation. The polypeptide is Thioredoxin domain-containing protein 11 (TXNDC11) (Bos taurus (Bovine)).